The following is a 276-amino-acid chain: MLTDQSKRDALLNTHIHPTAVIHPKAELHPTVTVGPYAVIGENVKIGAQTTIGAHAVIEGPIEIGIGNRIFPSAVIGLEPQDLKYKGAASWVKIGDYNTIREFVTINRATHADEVTEIGSHNLLMAYVHVAHNCVIEDHVIIANAVALAGHVHIESRAVIGGALGVHQFVRIGRNAMLGGMSRIDRDAPPYMAVEGNPSRVRALNLIGLKRAGLTAEDLSSLKKAFRLLYRSQLTFKEALEELQALSNNQYVEYLYQFLQASTTGEKRRGPIPGKN.

It belongs to the transferase hexapeptide repeat family. LpxA subfamily. As to quaternary structure, homotrimer.

The protein localises to the cytoplasm. The enzyme catalyses a (3R)-hydroxyacyl-[ACP] + UDP-N-acetyl-alpha-D-glucosamine = a UDP-3-O-[(3R)-3-hydroxyacyl]-N-acetyl-alpha-D-glucosamine + holo-[ACP]. It functions in the pathway glycolipid biosynthesis; lipid IV(A) biosynthesis; lipid IV(A) from (3R)-3-hydroxytetradecanoyl-[acyl-carrier-protein] and UDP-N-acetyl-alpha-D-glucosamine: step 1/6. Involved in the biosynthesis of lipid A, a phosphorylated glycolipid that anchors the lipopolysaccharide to the outer membrane of the cell. The polypeptide is Acyl-[acyl-carrier-protein]--UDP-N-acetylglucosamine O-acyltransferase (Rippkaea orientalis (strain PCC 8801 / RF-1) (Cyanothece sp. (strain PCC 8801))).